The chain runs to 424 residues: MVFVACGLNHKTAPIHVREKVALQPAMQDSLLSSLLDLPEVNEAAILSTCNRTEIYCDTNTPEVLGNWLAHEHQLSEELLSQFLYIHQGKEGIKHTLRVASGLDSMMIGEPQILGQMKQAYQHACRLGTVKTQLRPVFEYIFRASKRIRTRSGIGANPVSIAYAAVQLIGQLFKNYHSLSVFLIGSGETASLVAKYLHQHGVHRFLIASRTLENAQKLAETFGGKTLSIGDIPQYLPLADVVISATACPLPFINKSLVEHALEQRNHAPMFLLDLAVPRDIEGNVNELEQVHLYNVDDLQSMIEKGMNERRNAALQAEQLIESELDNYIRWHRSLRAKDVICDYRNQMHTLAQQELQRALKKISAGQNQQDVLNEFSMRLVNKLTHNPTIGLRQIAWDNREDLLDLARYLFDTTANQSLYEEIS.

Substrate-binding positions include 49–52 (TCNR), S105, 110–112 (EPQ), and Q116. C50 serves as the catalytic Nucleophile. 185–190 (GSGETA) serves as a coordination point for NADP(+).

This sequence belongs to the glutamyl-tRNA reductase family. Homodimer.

It catalyses the reaction (S)-4-amino-5-oxopentanoate + tRNA(Glu) + NADP(+) = L-glutamyl-tRNA(Glu) + NADPH + H(+). Its pathway is porphyrin-containing compound metabolism; protoporphyrin-IX biosynthesis; 5-aminolevulinate from L-glutamyl-tRNA(Glu): step 1/2. Functionally, catalyzes the NADPH-dependent reduction of glutamyl-tRNA(Glu) to glutamate 1-semialdehyde (GSA). This chain is Glutamyl-tRNA reductase, found in Legionella pneumophila (strain Corby).